Here is a 70-residue protein sequence, read N- to C-terminus: MFRLTSVGCILLVIAFLNLVGLTNACTSEGYSCSSDSNCCKNVCCWNVCESHCRHPGKRTRLQGFFKHRR.

The first 25 residues, 1–25 (MFRLTSVGCILLVIAFLNLVGLTNA), serve as a signal peptide directing secretion. 4 disulfides stabilise this stretch: Cys-26/Cys-40, Cys-33/Cys-45, Cys-39/Cys-49, and Cys-44/Cys-53. The residue at position 56 (Pro-56) is a Proline amide. The propeptide occupies 60–70 (TRLQGFFKHRR).

Belongs to the conotoxin I2 superfamily. As to expression, expressed by the venom duct.

It is found in the secreted. Probable neurotoxin. This is Conotoxin Im11.11 from Conus imperialis (Imperial cone).